Here is a 92-residue protein sequence, read N- to C-terminus: Protein OP-ORF (92 aa).

Positions 53-82 form a coiled coil; that stretch reads KMLAATISILEEEVTELVTELNNTTNLTAK.

The chain is Protein OP-ORF from Rice dwarf virus (isolate Fujian) (RDV).